A 486-amino-acid chain; its full sequence is Cardiolipin synthase A (486 aa).

Helical transmembrane passes span threonine 3 to valine 23 and methionine 38 to phenylalanine 58. PLD phosphodiesterase domains lie at methionine 219–arginine 246 and glutamate 399–serine 426. Catalysis depends on residues histidine 224, lysine 226, aspartate 231, histidine 404, lysine 406, and aspartate 411.

It belongs to the phospholipase D family. Cardiolipin synthase subfamily. ClsA sub-subfamily.

It localises to the cell inner membrane. The enzyme catalyses 2 a 1,2-diacyl-sn-glycero-3-phospho-(1'-sn-glycerol) = a cardiolipin + glycerol. Catalyzes the reversible phosphatidyl group transfer from one phosphatidylglycerol molecule to another to form cardiolipin (CL) (diphosphatidylglycerol) and glycerol. This is Cardiolipin synthase A from Proteus mirabilis (strain HI4320).